The chain runs to 218 residues: Hypoxanthine-guanine phosphoribosyltransferase (218 aa).

Ala2 is subject to N-acetylalanine. Lys69 contributes to the GMP binding site. Lys103 is modified (N6-acetyllysine). A Glycyl lysine isopeptide (Lys-Gly) (interchain with G-Cter in SUMO1); alternate cross-link involves residue Lys115. A Glycyl lysine isopeptide (Lys-Gly) (interchain with G-Cter in SUMO2); alternate cross-link involves residue Lys115. Residues 134-142 (EDIIDTGKT), Lys166, 186-188 (KFV), and Asp194 each bind GMP. The active-site Proton acceptor is the Asp138. Thr142 bears the Phosphothreonine mark. Asp194 contacts Mg(2+).

This sequence belongs to the purine/pyrimidine phosphoribosyltransferase family. Homotetramer. It depends on Mg(2+) as a cofactor.

The protein resides in the cytoplasm. It carries out the reaction IMP + diphosphate = hypoxanthine + 5-phospho-alpha-D-ribose 1-diphosphate. The catalysed reaction is GMP + diphosphate = guanine + 5-phospho-alpha-D-ribose 1-diphosphate. Its pathway is purine metabolism; IMP biosynthesis via salvage pathway; IMP from hypoxanthine: step 1/1. Functionally, converts guanine to guanosine monophosphate, and hypoxanthine to inosine monophosphate. Transfers the 5-phosphoribosyl group from 5-phosphoribosylpyrophosphate onto the purine. Plays a central role in the generation of purine nucleotides through the purine salvage pathway. The polypeptide is Hypoxanthine-guanine phosphoribosyltransferase (HPRT1) (Pan troglodytes (Chimpanzee)).